The sequence spans 509 residues: Ceramide glucosyltransferase (509 aa).

Residues 1-42 are Lumenal-facing; sequence MIMQLGLTSLAFLALKCDAYNIAPKIDTPNVEPFAPSGGLKL. A helical membrane pass occupies residues 43 to 63; it reads LAIVAIIWYVVVLLVAYYGFF. The Cytoplasmic segment spans residues 64-384; sequence EIMQKFSKRK…EATLLEPTTE (321 aa). A short sequence motif (D1) is located at residue D123. A short sequence motif (D2) is located at residue D179. D321 is a short sequence motif (D3). Residue D321 is the Proton acceptor of the active site. Positions 361–365 match the (Q/R)XXRW motif; that stretch reads RRIRW. Residues 385-405 form a helical membrane-spanning segment; that stretch reads CLLCGTFGTFAISTLFLQSYF. At 406–408 the chain is on the lumenal side; the sequence is NWK. A helical membrane pass occupies residues 409–429; sequence FFIFHLLVWMVTDYTQFHILL. The Cytoplasmic segment spans residues 430–466; the sequence is TNASQDTATCNVPYFAEPNFNAYGSPFESSNLRTFHR. The helical transmembrane segment at 467–487 threads the bilayer; the sequence is WVLYWLLREVLALPIWISAML. Topologically, residues 488–509 are lumenal; it reads GTRIIWRNRPFRINVDLSAEEL.

Belongs to the glycosyltransferase 2 family.

The protein localises to the golgi apparatus membrane. The enzyme catalyses an N-acylsphing-4-enine + UDP-alpha-D-glucose = a beta-D-glucosyl-(1&lt;-&gt;1')-N-acylsphing-4-enine + UDP + H(+). It participates in lipid metabolism; sphingolipid metabolism. Its function is as follows. Catalyzes the final step in the biosynthesis of the membrane lipid glucosylceramide (GluCer), the transfer of glucose to ceramide. Glucosylceramides play important roles in growth, differentiation and pathogenicity. This is Ceramide glucosyltransferase from Komagataella phaffii (strain GS115 / ATCC 20864) (Yeast).